The following is a 159-amino-acid chain: MNRVLYPGTFDPITKGHGDLVERASRLFDHVIIAVAASPKKNPLFPLEQRVELAREVTKHLPNVEVVGFSTLLAHFAKEQNANVFLRGLRAVSDFEYEFQLANMNRQLAPDVESLFLTPSERYSFISSTLVREIAALGGDITKFVHPAVADALTLRFKK.

Thr-9 contacts substrate. Residues 9–10 (TF) and His-17 each bind ATP. Residues Lys-41, Leu-73, and Arg-87 each contribute to the substrate site. ATP-binding positions include 88-90 (GLR), Glu-98, and 123-129 (YSFISST).

Belongs to the bacterial CoaD family. Homohexamer. Mg(2+) is required as a cofactor.

Its subcellular location is the cytoplasm. It catalyses the reaction (R)-4'-phosphopantetheine + ATP + H(+) = 3'-dephospho-CoA + diphosphate. It functions in the pathway cofactor biosynthesis; coenzyme A biosynthesis; CoA from (R)-pantothenate: step 4/5. Its function is as follows. Reversibly transfers an adenylyl group from ATP to 4'-phosphopantetheine, yielding dephospho-CoA (dPCoA) and pyrophosphate. In Pseudomonas fluorescens (strain ATCC BAA-477 / NRRL B-23932 / Pf-5), this protein is Phosphopantetheine adenylyltransferase.